We begin with the raw amino-acid sequence, 366 residues long: tRNA/tmRNA (uracil-C(5))-methyltransferase (366 aa).

S-adenosyl-L-methionine contacts are provided by Q190, Y218, N223, E239, and D299. C324 acts as the Nucleophile in catalysis. Residue E358 is the Proton acceptor of the active site.

It belongs to the class I-like SAM-binding methyltransferase superfamily. RNA M5U methyltransferase family. TrmA subfamily.

It catalyses the reaction uridine(54) in tRNA + S-adenosyl-L-methionine = 5-methyluridine(54) in tRNA + S-adenosyl-L-homocysteine + H(+). It carries out the reaction uridine(341) in tmRNA + S-adenosyl-L-methionine = 5-methyluridine(341) in tmRNA + S-adenosyl-L-homocysteine + H(+). Dual-specificity methyltransferase that catalyzes the formation of 5-methyluridine at position 54 (m5U54) in all tRNAs, and that of position 341 (m5U341) in tmRNA (transfer-mRNA). The polypeptide is tRNA/tmRNA (uracil-C(5))-methyltransferase (Escherichia coli (strain ATCC 8739 / DSM 1576 / NBRC 3972 / NCIMB 8545 / WDCM 00012 / Crooks)).